A 183-amino-acid chain; its full sequence is Bifunctional protein PyrR (183 aa).

The PRPP-binding signature appears at 102-114 (VVLVDDVLYTGRT).

The protein belongs to the purine/pyrimidine phosphoribosyltransferase family. PyrR subfamily. As to quaternary structure, homodimer and homohexamer; in equilibrium.

The catalysed reaction is UMP + diphosphate = 5-phospho-alpha-D-ribose 1-diphosphate + uracil. Functionally, regulates transcriptional attenuation of the pyrimidine nucleotide (pyr) operon by binding in a uridine-dependent manner to specific sites on pyr mRNA. This disrupts an antiterminator hairpin in the RNA and favors formation of a downstream transcription terminator, leading to a reduced expression of downstream genes. Also displays a weak uracil phosphoribosyltransferase activity which is not physiologically significant. In Listeria monocytogenes serotype 4b (strain CLIP80459), this protein is Bifunctional protein PyrR.